Reading from the N-terminus, the 301-residue chain is Mitochondrial carnitine/acylcarnitine carrier protein (301 aa).

Ala-2 bears the N-acetylalanine mark. Over 2-12 (AEEPKPISPLK) the chain is Cytoplasmic. 3 Solcar repeats span residues 8 to 99 (ISPL…GKRL), 108 to 196 (LTYP…LKNL), and 207 to 293 (LSVP…PMKI). A helical membrane pass occupies residues 13 to 31 (NLLAGGFGGVCLVFVGHPL). Topologically, residues 32–73 (DTVKVRLQTQPPSLPGQPPMYSGTIDCFRKTLFREGITGLYR) are mitochondrial matrix. Residues 74 to 93 (GMAAPIIGVTPMFAVCFFGF) traverse the membrane as a helical segment. The Cytoplasmic portion of the chain corresponds to 94 to 112 (GLGKRLQQKSPEDELTYPQ). A helical transmembrane segment spans residues 113–131 (LFTAGMLSGVFTTGIMTPG). The Mitochondrial matrix portion of the chain corresponds to 132 to 170 (ERIKCLLQIQASSGKNKYSGTLDCAKKLYQEFGIRGFYK). 2 positions are modified to N6-acetyllysine: Lys-148 and Lys-157. Lys-170 is subject to N6-acetyllysine; alternate. An N6-succinyllysine; alternate modification is found at Lys-170. A helical transmembrane segment spans residues 171–190 (GTALTLMRDVPASGMYFMTY). At 191-211 (EWLKNLFTPQGKSVHDLSVPR) the chain is on the cytoplasmic side. A helical transmembrane segment spans residues 212-230 (VLVAGGFRGIFNWVVAIPP). Topologically, residues 231–267 (DVLKSRFQTAPPGKYPNGFRDVLRELIREEGVTSLYK) are mitochondrial matrix. A helical membrane pass occupies residues 268-287 (GFNAVMIRAFPANAACFLGF). Topologically, residues 288-301 (EIPMKILNWIAPNL) are cytoplasmic.

The protein belongs to the mitochondrial carrier (TC 2.A.29) family. Post-translationally, the N-terminus is blocked.

It is found in the mitochondrion inner membrane. It carries out the reaction O-acetyl-(R)-carnitine(in) + (R)-carnitine(out) = O-acetyl-(R)-carnitine(out) + (R)-carnitine(in). The enzyme catalyses an O-acyl-(R)-carnitine(in) + (R)-carnitine(out) = an O-acyl-(R)-carnitine(out) + (R)-carnitine(in). It catalyses the reaction O-propanoyl-(R)-carnitine(in) + (R)-carnitine(out) = O-propanoyl-(R)-carnitine(out) + (R)-carnitine(in). The catalysed reaction is O-hexadecanoyl-(R)-carnitine(in) + (R)-carnitine(out) = O-hexadecanoyl-(R)-carnitine(out) + (R)-carnitine(in). It carries out the reaction O-octanoyl-(R)-carnitine(in) + (R)-carnitine(out) = O-octanoyl-(R)-carnitine(out) + (R)-carnitine(in). The enzyme catalyses (R)-carnitine(in) = (R)-carnitine(out). Its function is as follows. Mediates the electroneutral exchange of acylcarnitines (O-acyl-(R)-carnitine or L-acylcarnitine) of different acyl chain lengths (ranging from O-acetyl-(R)-carnitine to long-chain O-acyl-(R)-carnitines) with free carnitine ((R)-carnitine or L-carnitine) across the mitochondrial inner membrane, via a ping-pong mechanism. Key player in the mitochondrial oxidation pathway, it translocates the fatty acids in the form of acylcarnitines into the mitochondrial matrix, where the carnitine palmitoyltransferase 2 (CPT-2) activates them to undergo fatty acid beta-oxidation. Catalyzes the unidirectional transport (uniport) of carnitine at lower rates than the antiport (exchange). The protein is Mitochondrial carnitine/acylcarnitine carrier protein of Rattus norvegicus (Rat).